The primary structure comprises 362 residues: UDP-3-O-acylglucosamine N-acyltransferase 1 (362 aa).

Histidine 258 functions as the Proton acceptor in the catalytic mechanism.

It belongs to the transferase hexapeptide repeat family. LpxD subfamily. Homotrimer.

The enzyme catalyses a UDP-3-O-[(3R)-3-hydroxyacyl]-alpha-D-glucosamine + a (3R)-hydroxyacyl-[ACP] = a UDP-2-N,3-O-bis[(3R)-3-hydroxyacyl]-alpha-D-glucosamine + holo-[ACP] + H(+). It participates in bacterial outer membrane biogenesis; LPS lipid A biosynthesis. Its function is as follows. Catalyzes the N-acylation of UDP-3-O-acylglucosamine using 3-hydroxyacyl-ACP as the acyl donor. Is involved in the biosynthesis of lipid A, a phosphorylated glycolipid that anchors the lipopolysaccharide to the outer membrane of the cell. This Nitrobacter winogradskyi (strain ATCC 25391 / DSM 10237 / CIP 104748 / NCIMB 11846 / Nb-255) protein is UDP-3-O-acylglucosamine N-acyltransferase 1.